We begin with the raw amino-acid sequence, 175 residues long: Large ribosomal subunit protein uL15 (175 aa).

Disordered regions lie at residues 1 to 65 (MSTL…LPKF) and 155 to 175 (PESA…QPKA). Residues 12-21 (RSWHRKKRVG) are compositionally biased toward basic residues. Over residues 22-38 (RGQGSGLGKTAGRGGKG) the composition is skewed to gly residues. The span at 160 to 169 (KAHAGKGVKA) shows a compositional bias: low complexity.

This sequence belongs to the universal ribosomal protein uL15 family. As to quaternary structure, part of the 50S ribosomal subunit.

Binds to the 23S rRNA. In Myxococcus xanthus (strain DK1622), this protein is Large ribosomal subunit protein uL15.